The sequence spans 348 residues: 3-keto-steroid reductase (348 aa).

Residues Leu-18, Thr-41, and Arg-47 each contribute to the NADP(+) site. Active-site proton donor residues include Ser-180 and Tyr-203. The NADP(+) site is built by Tyr-203, Lys-207, and Ser-238. Lys-207 acts as the Lowers pKa of active site Tyr in catalysis.

This sequence belongs to the short-chain dehydrogenases/reductases (SDR) family. ERG27 subfamily.

It carries out the reaction a 3beta-hydroxysteroid + NADP(+) = a 3-oxosteroid + NADPH + H(+). The protein operates within steroid biosynthesis; zymosterol biosynthesis; zymosterol from lanosterol: step 5/6. Responsible for the reduction of the keto group on the C-3 of sterols. This Candida glabrata (strain ATCC 2001 / BCRC 20586 / JCM 3761 / NBRC 0622 / NRRL Y-65 / CBS 138) (Yeast) protein is 3-keto-steroid reductase (ERG27).